The sequence spans 820 residues: Leucine--tRNA ligase (820 aa).

The 'HIGH' region signature appears at 42–52 (PYPSGDLHMGH). Residues 576-580 (KMSKS) carry the 'KMSKS' region motif. K579 provides a ligand contact to ATP.

This sequence belongs to the class-I aminoacyl-tRNA synthetase family.

It is found in the cytoplasm. The catalysed reaction is tRNA(Leu) + L-leucine + ATP = L-leucyl-tRNA(Leu) + AMP + diphosphate. This is Leucine--tRNA ligase from Coxiella burnetii (strain RSA 493 / Nine Mile phase I).